The following is a 130-amino-acid chain: ATP synthase epsilon chain (130 aa).

Belongs to the ATPase epsilon chain family. In terms of assembly, F-type ATPases have 2 components, CF(1) - the catalytic core - and CF(0) - the membrane proton channel. CF(1) has five subunits: alpha(3), beta(3), gamma(1), delta(1), epsilon(1). CF(0) has three main subunits: a, b and c.

It localises to the cell inner membrane. Functionally, produces ATP from ADP in the presence of a proton gradient across the membrane. The chain is ATP synthase epsilon chain from Campylobacter hominis (strain ATCC BAA-381 / DSM 21671 / CCUG 45161 / LMG 19568 / NCTC 13146 / CH001A).